A 683-amino-acid polypeptide reads, in one-letter code: Outer dynein arm-docking complex subunit 4 (683 aa).

TPR repeat units follow at residues 13 to 46 (FPSY…QSGD), 47 to 80 (KNCL…DPTF), 48 to 80 (NCLV…DPTF), and 81 to 114 (CKGI…RPDR). Positions 158-179 (QQKPHPVRQLIHHPKRESKRKG) are disordered. The span at 167 to 179 (LIHHPKRESKRKG) shows a compositional bias: basic residues. TPR repeat units follow at residues 275-311 (LKSL…NKEE), 320-353 (GNLY…AKEY), 360-393 (SRAL…AKTT), 397-430 (TWLF…AEEE), and 437-470 (LNAS…AKLV). Disordered stretches follow at residues 510–537 (ENAT…PEKV) and 553–683 (VLSK…EPIE). Basic and acidic residues-rich tracts occupy residues 521 to 537 (TAKE…PEKV), 566 to 590 (PEQR…ERGP), 602 to 620 (GRTE…RPSE), and 629 to 675 (SSPR…IEKD). The stretch at 592 to 625 (DTAKGQFGEAGRTEQNREETREIYRRPSELDQNL) is one TPR 15 repeat.

In terms of assembly, component of the outer dynein arm-docking complex along with ODAD1, ODAD2 and ODAD3. Interacts with ODAD1; this interaction may facilitate the recruitment and/or attachment of outer dynein arm docking complex proteins, including ODAD1, ODAD3 and ODAD2, to ciliary axonemes. Interacts with components of the IFT complex A, including IFT140, TTC21B/IFT139 and WDR19/IFT144, and the IFT complex B, including IFT46, IFT52 and IFT57. Interacts with CFAP53. Expressed in trachea multiciliated cells.

Its subcellular location is the cytoplasm. The protein resides in the cytoskeleton. It is found in the cilium axoneme. Its function is as follows. Component of the outer dynein arm-docking complex (ODA-DC) that mediates outer dynein arms (ODA) binding onto the doublet microtubule. Plays an essential role for the assembly of ODA-DC and for the docking of ODA in ciliary axoneme. In Bos taurus (Bovine), this protein is Outer dynein arm-docking complex subunit 4.